Consider the following 273-residue polypeptide: HTH-type transcriptional activator RhaS (273 aa).

Positions tyrosine 174–glutamine 272 constitute an HTH araC/xylS-type domain. DNA-binding regions (H-T-H motif) lie at residues proline 191–threonine 212 and valine 239–phenylalanine 262.

Binds DNA as a dimer.

The protein resides in the cytoplasm. In terms of biological role, activates expression of the rhaBAD and rhaT operons. The polypeptide is HTH-type transcriptional activator RhaS (Yersinia pestis bv. Antiqua (strain Angola)).